The following is a 370-amino-acid chain: Alanine racemase (370 aa).

The Proton acceptor; specific for D-alanine role is filled by K36. K36 is subject to N6-(pyridoxal phosphate)lysine. R134 is a substrate binding site. Y265 serves as the catalytic Proton acceptor; specific for L-alanine. M313 contributes to the substrate binding site.

It belongs to the alanine racemase family. Requires pyridoxal 5'-phosphate as cofactor.

The enzyme catalyses L-alanine = D-alanine. Its pathway is amino-acid biosynthesis; D-alanine biosynthesis; D-alanine from L-alanine: step 1/1. Functionally, catalyzes the interconversion of L-alanine and D-alanine. May also act on other amino acids. In Desulforamulus reducens (strain ATCC BAA-1160 / DSM 100696 / MI-1) (Desulfotomaculum reducens), this protein is Alanine racemase (alr).